The primary structure comprises 493 residues: WAS/WASL-interacting protein family member 1 (493 aa).

Over residues 1–14 (MPVPPPPAPPPPPT) the composition is skewed to pro residues. The disordered stretch occupies residues 1–493 (MPVPPPPAPP…GAPPLPPIPR (493 aa)). Positions 21–31 (EKPTLNKTEQA) are enriched in polar residues. The 18-residue stretch at 32–49 (GRNALLSDISKGKKLKKT) folds into the WH2 domain. The residue at position 33 (Arg-33) is an Asymmetric dimethylarginine. A binds actin region spans residues 45-48 (KLKK). The segment covering 67–105 (ASAGGYGGGGGGGGGGGGGGGGSGGNFGGGGPPGLGGLF) has biased composition (gly residues). Omega-N-methylarginine occurs at positions 126 and 135. Pro residues-rich tracts occupy residues 142–155 (FSPP…PAPS), 162–175 (PPEP…PPRP), and 183–195 (SLPP…PRPV). Position 143 is a phosphoserine (Ser-143). Ser-227 bears the Phosphoserine mark. Composition is skewed to pro residues over residues 239 to 248 (FPRPPLPPTP), 274 to 290 (VPPP…PSTP), and 298 to 315 (APPP…PLPP). Phosphoserine occurs at positions 330 and 340. The span at 336–361 (PPLPSPGRSGPLPPPPSERPPPPVRD) shows a compositional bias: pro residues. 3 XRSGPXPPXP motif repeats span residues 342–351 (GRSGPLPPPP), 364–373 (GRSGPLPPPP), and 400–409 (PRSGPRPPLP). A compositionally biased stretch (pro residues) spans 403–424 (GPRPPLPPDRPGAGAPPPPPPS). The span at 425-434 (TSVRNGFQDS) shows a compositional bias: polar residues. Over residues 470-484 (ARNESRSGSNRRERG) the composition is skewed to basic and acidic residues.

It belongs to the verprolin family. Binds to WAS within the N-terminal region, at a site distinct from the CDC42-binding site. Binds profilin and actin. Binds to WASL. Interacts with DBNL. Interacts with DBNL. Interacts with FNBP1L (via the SH3 domain).

The protein resides in the cytoplasmic vesicle. It is found in the cytoplasm. Its subcellular location is the cytoskeleton. The protein localises to the cell projection. It localises to the ruffle. In terms of biological role, plays a role in the reorganization of the actin cytoskeleton. Contributes with NCK1 and GRB2 in the recruitment and activation of WASL. May participate in regulating the subcellular localization of WASL, resulting in the disassembly of stress fibers in favor of filopodia formation. Plays a role in the formation of cell ruffles. This Mus musculus (Mouse) protein is WAS/WASL-interacting protein family member 1 (Wipf1).